Consider the following 944-residue polypeptide: MASNLISRLLPSNTQGRSIYDSLRAHDEASGSDMDVEERAAMAIDEENLRFKDDELGNPADVISGESVTESTAFLSDQQQTPQKQGYNRKGKGKGRSHNLAESPRLLEEDSDDDVPASLLIEGNNRHADPETPNHIRARQTALPKRAPAVPGPSAQQIKEERDRAHWEMTQEQQKLHEDGGNRATGVPHTPQSIPQNTGFYLTGSPKDKAMYRWVNVTNLDNFIGDLYAYFEGAGIWCIVLAKVIDILTLVFVAVFTTFLTQCVDYKKIYRGDARSLEYALVPQCTKKISGMSNVAIWLVCLFVLYRVYQLLTDLPRLMKMRDFFTYLLEIQDSNMQTVSFQDVIARLMALRDANPMTVERISPDNRKFVLGTQSKQRLDAHDIANRLMRKENYLIALFNKEILDLTLPLPFLQGRQLFSKTLQWNLEWCILDFVFNDYGQVRQLVLKDSHRRELSDGLRNRFLFAGLMNVICAPVIVIYVVIVYFFKYFNQYHKNPAALGSRGYTPLAEWKFREFNELHHLFNKRLNMSYPFASRYLNQFPNVKTAHMAKFITFMAGAVVSVLVVATVWDSEVLAGFDITSERPVLFYIGVFGSLWAITNGMIPEENEVFDPEYALRQVIEYTHYMPNHWQDRLHSDEVKREFSTLYQLKLMIFIEEVFSIIITPFLLWFSLPKCADQIIDFFREFTVHVDGVGYVCSFAVFDFKKGDGRAPTQGKAKSDMREDYYSTKHGKMAASYYNFLDNYLLNPKTGVPGHNPPGLRQQFYPPPAFPGLISSPTSGADLQSSRMGRSDVRPMNRAPYVPQQAVRTPRFPSNTTATGSPMASILLDPRHQPPSSELGARSVRRSSRSRYQARRGNNIIEDPMEDENGPGRPVAQPGRSYAVDDTVANLGESTWEVSPAKADADGQDEEEDGDGTGGAGVLGLVYQFQKAQTNGRPGVSIW.

Topologically, residues 1–235 (MASNLISRLL…DLYAYFEGAG (235 aa)) are cytoplasmic. Polar residues predominate over residues 70–86 (ESTAFLSDQQQTPQKQG). Disordered regions lie at residues 70–113 (ESTA…DSDD) and 142–199 (ALPK…QNTG). The segment covering 87–97 (YNRKGKGKGRS) has biased composition (basic residues). The segment covering 158 to 181 (IKEERDRAHWEMTQEQQKLHEDGG) has biased composition (basic and acidic residues). Polar residues predominate over residues 190–199 (TPQSIPQNTG). A helical membrane pass occupies residues 236-256 (IWCIVLAKVIDILTLVFVAVF). The Lumenal portion of the chain corresponds to 257-294 (TTFLTQCVDYKKIYRGDARSLEYALVPQCTKKISGMSN). The helical transmembrane segment at 295–315 (VAIWLVCLFVLYRVYQLLTDL) threads the bilayer. At 316-462 (PRLMKMRDFF…RELSDGLRNR (147 aa)) the chain is on the cytoplasmic side. An intramembrane segment occupies 463–483 (FLFAGLMNVICAPVIVIYVVI). Topologically, residues 484–549 (VYFFKYFNQY…QFPNVKTAHM (66 aa)) are cytoplasmic. A helical transmembrane segment spans residues 550–570 (AKFITFMAGAVVSVLVVATVW). Topologically, residues 571 to 584 (DSEVLAGFDITSER) are lumenal. Residues 585-605 (PVLFYIGVFGSLWAITNGMIP) traverse the membrane as a helical segment. The Cytoplasmic segment spans residues 606-651 (EENEVFDPEYALRQVIEYTHYMPNHWQDRLHSDEVKREFSTLYQLK). Residues 652–672 (LMIFIEEVFSIIITPFLLWFS) lie within the membrane without spanning it. Over 673-944 (LPKCADQIID…TNGRPGVSIW (272 aa)) the chain is Cytoplasmic. Disordered regions lie at residues 753 to 881 (VPGH…QPGR) and 894 to 922 (ESTWEVSPAKADADGQDEEEDGDGTGGAG). Polar residues-rich tracts occupy residues 776–789 (SSPTSGADLQSSRM) and 813–823 (FPSNTTATGSP). The span at 844-855 (SVRRSSRSRYQA) shows a compositional bias: basic residues. Residues 907–916 (DGQDEEEDGD) show a composition bias toward acidic residues.

Belongs to the ATG9 family. In terms of assembly, homotrimer; forms a homotrimer with a central pore that forms a path between the two membrane leaflets. Phosphorylated by atg1. Atg1 phosphorylation is required for preautophagosome elongation.

The protein localises to the preautophagosomal structure membrane. The protein resides in the cytoplasmic vesicle membrane. Its subcellular location is the golgi apparatus membrane. It localises to the endoplasmic reticulum membrane. The enzyme catalyses a 1,2-diacyl-sn-glycero-3-phosphocholine(in) = a 1,2-diacyl-sn-glycero-3-phosphocholine(out). It carries out the reaction a 1,2-diacyl-sn-glycero-3-phospho-L-serine(in) = a 1,2-diacyl-sn-glycero-3-phospho-L-serine(out). The catalysed reaction is a 1,2-diacyl-sn-glycero-3-phosphoethanolamine(in) = a 1,2-diacyl-sn-glycero-3-phosphoethanolamine(out). It catalyses the reaction a 1,2-diacyl-sn-glycero-3-phospho-(1D-myo-inositol-3-phosphate)(in) = a 1,2-diacyl-sn-glycero-3-phospho-(1D-myo-inositol-3-phosphate)(out). Phospholipid scramblase involved in autophagy and cytoplasm to vacuole transport (Cvt) vesicle formation. Cycles between the preautophagosomal structure/phagophore assembly site (PAS) and the cytoplasmic vesicle pool and supplies membrane for the growing autophagosome. Lipid scramblase activity plays a key role in preautophagosomal structure/phagophore assembly by distributing the phospholipids that arrive through atg2 from the cytoplasmic to the luminal leaflet of the bilayer, thereby driving autophagosomal membrane expansion. Required for mitophagy. Also involved in endoplasmic reticulum-specific autophagic process and is essential for the survival of cells subjected to severe ER stress. Different machineries are required for anterograde trafficking to the PAS during either the Cvt pathway or bulk autophagy and for retrograde trafficking. The sequence is that of Autophagy-related protein 9 (atg9) from Sclerotinia sclerotiorum (strain ATCC 18683 / 1980 / Ss-1) (White mold).